Consider the following 1829-residue polypeptide: Iron-regulated protein FrpC (1829 aa).

Hemolysin-type calcium-binding repeat units lie at residues 869–886, 887–904, 1015–1032, 1033–1050, 1051–1068, 1069–1086, 1087–1104, 1215–1232, 1233–1250, 1251–1268, 1269–1286, 1287–1304, 1415–1432, 1433–1450, 1451–1468, 1469–1486, 1487–1504, 1615–1632, 1633–1650, 1651–1668, 1669–1686, and 1687–1704; these read FGHNKNVSLYGNDGNDTL, IGGAGNDYLEGGSGSDTY, NGGLGDDYLYGADGDDLL, NGDAGNDSIYSGNGNDTL, DGGEGNDALYGYNGNDAL, NGGEGNDHLNGEDGNDTL, and NGGEGNDALYGYNGNDAL. The segment at 1671–1690 is disordered; the sequence is GEGNDHLNGEDGNDTLIGGA.

It belongs to the RTX prokaryotic toxin (TC 1.C.11) family.

Its subcellular location is the cell outer membrane. It localises to the secreted. Its function is as follows. May participate in the pathogenesis of meningococcal disease. The protein is Iron-regulated protein FrpC (frpC) of Neisseria meningitidis serogroup B (strain ATCC BAA-335 / MC58).